Here is a 690-residue protein sequence, read N- to C-terminus: Exonuclease GOR (690 aa).

Disordered stretches follow at residues 136–162 (TRVA…NRSG) and 567–690 (QPRH…SLHH). Polar residues predominate over residues 585-595 (APSTTAISPES). The segment covering 605 to 614 (KETGAVDGRR) has biased composition (basic and acidic residues). Residues 612 to 626 (GRRGQKAKSNPNRPL) form a GOR14-1 epitope region. Residues 631 to 646 (NPCRGPSGLSPSLCPS) show a composition bias toward low complexity. Residues 661–682 (PPLPVPRVPAAPPRACPHPSAH) show a composition bias toward pro residues.

This sequence belongs to the REXO1/REXO3 family.

The protein localises to the cytoplasm. Its subcellular location is the nucleus. This is Exonuclease GOR (REXO1L1) from Pan troglodytes (Chimpanzee).